We begin with the raw amino-acid sequence, 556 residues long: Arginine--tRNA ligase (556 aa).

Positions 132–142 (ANPTGDLHLGH) match the 'HIGH' region motif.

It belongs to the class-I aminoacyl-tRNA synthetase family. Monomer.

The protein resides in the cytoplasm. The catalysed reaction is tRNA(Arg) + L-arginine + ATP = L-arginyl-tRNA(Arg) + AMP + diphosphate. The sequence is that of Arginine--tRNA ligase from Shouchella clausii (strain KSM-K16) (Alkalihalobacillus clausii).